Consider the following 199-residue polypeptide: Small ribosomal subunit protein uS5 (199 aa).

A disordered region spans residues 1–29 (MATAGRRGGAASERRERRESRRQEASPEK). Residues 12–27 (SERRERRESRRQEASP) show a composition bias toward basic and acidic residues. An S5 DRBM domain is found at 32–95 (FLERVVTINR…EEAKKHFFTV (64 aa)).

The protein belongs to the universal ribosomal protein uS5 family. Part of the 30S ribosomal subunit. Contacts proteins S4 and S8.

Its function is as follows. With S4 and S12 plays an important role in translational accuracy. Located at the back of the 30S subunit body where it stabilizes the conformation of the head with respect to the body. The sequence is that of Small ribosomal subunit protein uS5 from Acidothermus cellulolyticus (strain ATCC 43068 / DSM 8971 / 11B).